The primary structure comprises 80 residues: Acyl carrier protein (80 aa).

The 76-residue stretch at 2–77 (KNIEERIKKI…KSIDFIQNKN (76 aa)) folds into the Carrier domain. Ser-37 is modified (O-(pantetheine 4'-phosphoryl)serine).

Belongs to the acyl carrier protein (ACP) family. Post-translationally, 4'-phosphopantetheine is transferred from CoA to a specific serine of apo-ACP by AcpS. This modification is essential for activity because fatty acids are bound in thioester linkage to the sulfhydryl of the prosthetic group.

It is found in the cytoplasm. Its pathway is lipid metabolism; fatty acid biosynthesis. Its function is as follows. Carrier of the growing fatty acid chain in fatty acid biosynthesis. This chain is Acyl carrier protein, found in Buchnera aphidicola subsp. Acyrthosiphon pisum (strain 5A).